A 320-amino-acid polypeptide reads, in one-letter code: ATP-dependent 6-phosphofructokinase (320 aa).

Gly-12 contacts ATP. ADP-binding positions include 22-26 (RGVVR) and 55-60 (RYSVSD). Residues 73–74 (RF) and 103–106 (GDGS) contribute to the ATP site. Asp-104 lines the Mg(2+) pocket. Substrate is bound at residue 126–128 (TID). Asp-128 acts as the Proton acceptor in catalysis. An ADP-binding site is contributed by Arg-155. Substrate-binding positions include Arg-163 and 170 to 172 (MGR). Residues 186 to 188 (GCE), Lys-212, and 214 to 216 (KKH) contribute to the ADP site. Residues Glu-223, Arg-244, and 250-253 (HIQR) contribute to the substrate site.

This sequence belongs to the phosphofructokinase type A (PFKA) family. ATP-dependent PFK group I subfamily. Prokaryotic clade 'B1' sub-subfamily. In terms of assembly, homotetramer. Mg(2+) serves as cofactor.

It localises to the cytoplasm. It carries out the reaction beta-D-fructose 6-phosphate + ATP = beta-D-fructose 1,6-bisphosphate + ADP + H(+). It functions in the pathway carbohydrate degradation; glycolysis; D-glyceraldehyde 3-phosphate and glycerone phosphate from D-glucose: step 3/4. With respect to regulation, allosterically activated by ADP and other diphosphonucleosides, and allosterically inhibited by phosphoenolpyruvate. Functionally, catalyzes the phosphorylation of D-fructose 6-phosphate to fructose 1,6-bisphosphate by ATP, the first committing step of glycolysis. In Cronobacter sakazakii (strain ATCC BAA-894) (Enterobacter sakazakii), this protein is ATP-dependent 6-phosphofructokinase.